The sequence spans 173 residues: Ribosome maturation factor RimM (173 aa).

Residues 95 to 169 (EGSYYFKDIL…RIEVTLLEGL (75 aa)) enclose the PRC barrel domain.

The protein belongs to the RimM family. In terms of assembly, binds ribosomal protein uS19.

The protein localises to the cytoplasm. Its function is as follows. An accessory protein needed during the final step in the assembly of 30S ribosomal subunit, possibly for assembly of the head region. Essential for efficient processing of 16S rRNA. May be needed both before and after RbfA during the maturation of 16S rRNA. It has affinity for free ribosomal 30S subunits but not for 70S ribosomes. In Lactobacillus gasseri (strain ATCC 33323 / DSM 20243 / BCRC 14619 / CIP 102991 / JCM 1131 / KCTC 3163 / NCIMB 11718 / NCTC 13722 / AM63), this protein is Ribosome maturation factor RimM.